Here is a 133-residue protein sequence, read N- to C-terminus: Glycine cleavage system H protein (133 aa).

Residues 24–106 enclose the Lipoyl-binding domain; sequence IATIGISAYA…YGDGWLLKVR (83 aa). At lysine 65 the chain carries N6-lipoyllysine.

The protein belongs to the GcvH family. The glycine cleavage system is composed of four proteins: P, T, L and H. The cofactor is (R)-lipoate.

In terms of biological role, the glycine cleavage system catalyzes the degradation of glycine. The H protein shuttles the methylamine group of glycine from the P protein to the T protein. This chain is Glycine cleavage system H protein, found in Crocosphaera subtropica (strain ATCC 51142 / BH68) (Cyanothece sp. (strain ATCC 51142)).